We begin with the raw amino-acid sequence, 421 residues long: CaM kinase-like vesicle-associated protein (421 aa).

Residues 24–284 form the Protein kinase domain; that stretch reads YDLGQVVKSE…AQEAIAHEWI (261 aa). The interval 326-421 is disordered; it reads ASEQGDTGAS…PQMLPQRKGY (96 aa). Low complexity-rich tracts occupy residues 330–340 and 390–406; these read GDTGASGLAAG and QQQA…QQAR.

Belongs to the protein kinase superfamily. CAMK Ser/Thr protein kinase family. As to quaternary structure, interacts with calmodulin, in the presence of calcium. The cofactor is Ca(2+). As to expression, ubiquitously expressed.

Its subcellular location is the cytoplasmic vesicle membrane. In terms of biological role, does not appear to have detectable kinase activity. The protein is CaM kinase-like vesicle-associated protein (camkv) of Takifugu rubripes (Japanese pufferfish).